Consider the following 416-residue polypeptide: CinA-like protein (416 aa).

The protein belongs to the CinA family.

This chain is CinA-like protein, found in Thermosynechococcus vestitus (strain NIES-2133 / IAM M-273 / BP-1).